We begin with the raw amino-acid sequence, 127 residues long: Large ribosomal subunit protein eL8 (127 aa).

It belongs to the eukaryotic ribosomal protein eL8 family. As to quaternary structure, part of the 50S ribosomal subunit. Probably part of the RNase P complex.

It is found in the cytoplasm. Multifunctional RNA-binding protein that recognizes the K-turn motif in ribosomal RNA, the RNA component of RNase P, box H/ACA, box C/D and box C'/D' sRNAs. This is Large ribosomal subunit protein eL8 from Picrophilus torridus (strain ATCC 700027 / DSM 9790 / JCM 10055 / NBRC 100828 / KAW 2/3).